The sequence spans 685 residues: Probable glucan endo-1,3-beta-glucosidase btgC (685 aa).

Disordered stretches follow at residues 1 to 96, 119 to 168, and 180 to 202; these read MSGP…NLGP, GIDA…RDSY, and PAGQLTPGGSNPSQRSLFDSPYQ. Topologically, residues 1 to 312 are cytoplasmic; sequence MSGPHRSFSF…PTPGGGSRKR (312 aa). 2 stretches are compositionally biased toward polar residues: residues 47–61 and 73–90; these read SARSQAMGSSPSSGF and GQNSGHTQAMRTNSTTPG. The chain crosses the membrane as a helical; Signal-anchor for type II membrane protein span at residues 313-333; the sequence is GWIVGLALAFIVVGAIVGGAV. Topologically, residues 334 to 685 are extracellular; sequence GGTLGNRENE…IPDCGGKTAA (352 aa). The interval 335–369 is disordered; the sequence is GTLGNRENEAPDTTKSASSDTESNGDLNKDSSEIK. Positions 345–360 are enriched in polar residues; the sequence is PDTTKSASSDTESNGD. 3 N-linked (GlcNAc...) asparagine glycosylation sites follow: asparagine 405, asparagine 428, and asparagine 456. Glutamate 488 (proton donor) is an active-site residue. The active-site Nucleophile is glutamate 587. An N-linked (GlcNAc...) asparagine glycan is attached at asparagine 632.

It belongs to the glycosyl hydrolase 17 family.

Its subcellular location is the cell membrane. It catalyses the reaction Hydrolysis of (1-&gt;3)-beta-D-glucosidic linkages in (1-&gt;3)-beta-D-glucans.. Functionally, glucanases play a role in cell expansion during growth, in cell-cell fusion during mating, and in spore release during sporulation. This enzyme may be involved in beta-glucan degradation. Active on laminarin and lichenan. This chain is Probable glucan endo-1,3-beta-glucosidase btgC (btgC), found in Aspergillus oryzae (strain ATCC 42149 / RIB 40) (Yellow koji mold).